Reading from the N-terminus, the 172-residue chain is Adenine phosphoribosyltransferase (172 aa).

The protein belongs to the purine/pyrimidine phosphoribosyltransferase family. In terms of assembly, homodimer.

The protein resides in the cytoplasm. It catalyses the reaction AMP + diphosphate = 5-phospho-alpha-D-ribose 1-diphosphate + adenine. It functions in the pathway purine metabolism; AMP biosynthesis via salvage pathway; AMP from adenine: step 1/1. Catalyzes a salvage reaction resulting in the formation of AMP, that is energically less costly than de novo synthesis. In Crocosphaera subtropica (strain ATCC 51142 / BH68) (Cyanothece sp. (strain ATCC 51142)), this protein is Adenine phosphoribosyltransferase.